We begin with the raw amino-acid sequence, 268 residues long: MQVIIFDNAQQVAENAAEWVAELINKKSNPVLGLATGSTPISLYQELVNKYKAGELSFSNTTSFNLDEYLGINEKNQQSYRHFMNENLFNHVDINKLKTFLPTCNQGENPREQGLDYEDKIAQAGGIDLQILGIGANGHIGFNEPTSSLASRTRIKTLTQQTLNDNSRLFAADEFQPTLAMTMGIATILDARYVLLMATGKSKAKAVKEMVTGPLSAVCPASSLQLHENAIVLLDKEAASELEDHEYYVWADKQNVKINQEFGLYHNY.

D67 serves as the catalytic Proton acceptor; for enolization step. Catalysis depends on N137, which acts as the For ring-opening step. The active-site Proton acceptor; for ring-opening step is H139. Catalysis depends on E144, which acts as the For ring-opening step.

Belongs to the glucosamine/galactosamine-6-phosphate isomerase family. NagB subfamily. In terms of assembly, homohexamer.

It catalyses the reaction alpha-D-glucosamine 6-phosphate + H2O = beta-D-fructose 6-phosphate + NH4(+). The protein operates within amino-sugar metabolism; N-acetylneuraminate degradation; D-fructose 6-phosphate from N-acetylneuraminate: step 5/5. Its function is as follows. Catalyzes the reversible isomerization-deamination of glucosamine 6-phosphate (GlcN6P) to form fructose 6-phosphate (Fru6P) and ammonium ion. The chain is Glucosamine-6-phosphate deaminase from Colwellia psychrerythraea (strain 34H / ATCC BAA-681) (Vibrio psychroerythus).